Here is a 421-residue protein sequence, read N- to C-terminus: Serine hydroxymethyltransferase (421 aa).

Residues leucine 121 and 125–127 each bind (6S)-5,6,7,8-tetrahydrofolate; that span reads GHL. Position 229 is an N6-(pyridoxal phosphate)lysine (lysine 229).

Belongs to the SHMT family. In terms of assembly, homodimer. Pyridoxal 5'-phosphate is required as a cofactor.

Its subcellular location is the cytoplasm. It carries out the reaction (6R)-5,10-methylene-5,6,7,8-tetrahydrofolate + glycine + H2O = (6S)-5,6,7,8-tetrahydrofolate + L-serine. The protein operates within one-carbon metabolism; tetrahydrofolate interconversion. It participates in amino-acid biosynthesis; glycine biosynthesis; glycine from L-serine: step 1/1. In terms of biological role, catalyzes the reversible interconversion of serine and glycine with tetrahydrofolate (THF) serving as the one-carbon carrier. This reaction serves as the major source of one-carbon groups required for the biosynthesis of purines, thymidylate, methionine, and other important biomolecules. Also exhibits THF-independent aldolase activity toward beta-hydroxyamino acids, producing glycine and aldehydes, via a retro-aldol mechanism. The sequence is that of Serine hydroxymethyltransferase from Actinobacillus pleuropneumoniae serotype 5b (strain L20).